We begin with the raw amino-acid sequence, 660 residues long: tRNA 5-methylaminomethyl-2-thiouridine biosynthesis bifunctional protein MnmC (660 aa).

The interval 1 to 242 (MTDRIVPATL…KRAMLVGEFA (242 aa)) is tRNA (mnm(5)s(2)U34)-methyltransferase. The tract at residues 266–660 (IGAGLAGCAV…VRALRHGRVA (395 aa)) is FAD-dependent cmnm(5)s(2)U34 oxidoreductase.

In the N-terminal section; belongs to the methyltransferase superfamily. tRNA (mnm(5)s(2)U34)-methyltransferase family. It in the C-terminal section; belongs to the DAO family. The cofactor is FAD.

The protein resides in the cytoplasm. The enzyme catalyses 5-aminomethyl-2-thiouridine(34) in tRNA + S-adenosyl-L-methionine = 5-methylaminomethyl-2-thiouridine(34) in tRNA + S-adenosyl-L-homocysteine + H(+). Functionally, catalyzes the last two steps in the biosynthesis of 5-methylaminomethyl-2-thiouridine (mnm(5)s(2)U) at the wobble position (U34) in tRNA. Catalyzes the FAD-dependent demodification of cmnm(5)s(2)U34 to nm(5)s(2)U34, followed by the transfer of a methyl group from S-adenosyl-L-methionine to nm(5)s(2)U34, to form mnm(5)s(2)U34. In Burkholderia pseudomallei (strain K96243), this protein is tRNA 5-methylaminomethyl-2-thiouridine biosynthesis bifunctional protein MnmC.